Consider the following 484-residue polypeptide: Chromosomal replication initiator protein DnaA (484 aa).

The domain I, interacts with DnaA modulators stretch occupies residues Met-1–Thr-73. The domain II stretch occupies residues Thr-73–Pro-140. The tract at residues Phe-141 to Ile-357 is domain III, AAA+ region. ATP-binding residues include Gly-185, Gly-187, Lys-188, and Thr-189. Residues Asp-358 to Asn-484 form a domain IV, binds dsDNA region.

Belongs to the DnaA family. In terms of assembly, oligomerizes as a right-handed, spiral filament on DNA at oriC.

It localises to the cytoplasm. Its function is as follows. Plays an essential role in the initiation and regulation of chromosomal replication. ATP-DnaA binds to the origin of replication (oriC) to initiate formation of the DNA replication initiation complex once per cell cycle. Binds the DnaA box (a 9 base pair repeat at the origin) and separates the double-stranded (ds)DNA. Forms a right-handed helical filament on oriC DNA; dsDNA binds to the exterior of the filament while single-stranded (ss)DNA is stabiized in the filament's interior. The ATP-DnaA-oriC complex binds and stabilizes one strand of the AT-rich DNA unwinding element (DUE), permitting loading of DNA polymerase. After initiation quickly degrades to an ADP-DnaA complex that is not apt for DNA replication. Binds acidic phospholipids. The sequence is that of Chromosomal replication initiator protein DnaA from Borrelia recurrentis (strain A1).